Reading from the N-terminus, the 378-residue chain is Erythronate-4-phosphate dehydrogenase (378 aa).

Substrate contacts are provided by S45 and T66. Positions 146 and 175 each coordinate NAD(+). The active site involves R208. Residue D232 coordinates NAD(+). E237 is a catalytic residue. Catalysis depends on H254, which acts as the Proton donor. G257 provides a ligand contact to NAD(+). Substrate is bound at residue Y258.

Belongs to the D-isomer specific 2-hydroxyacid dehydrogenase family. PdxB subfamily. Homodimer.

It is found in the cytoplasm. It catalyses the reaction 4-phospho-D-erythronate + NAD(+) = (R)-3-hydroxy-2-oxo-4-phosphooxybutanoate + NADH + H(+). It functions in the pathway cofactor biosynthesis; pyridoxine 5'-phosphate biosynthesis; pyridoxine 5'-phosphate from D-erythrose 4-phosphate: step 2/5. Its function is as follows. Catalyzes the oxidation of erythronate-4-phosphate to 3-hydroxy-2-oxo-4-phosphonooxybutanoate. The chain is Erythronate-4-phosphate dehydrogenase from Pectobacterium carotovorum subsp. carotovorum (strain PC1).